Here is a 549-residue protein sequence, read N- to C-terminus: Glucose-6-phosphate isomerase (549 aa).

Catalysis depends on glutamate 352, which acts as the Proton donor. Residues histidine 383 and lysine 511 contribute to the active site.

The protein belongs to the GPI family.

Its subcellular location is the cytoplasm. The enzyme catalyses alpha-D-glucose 6-phosphate = beta-D-fructose 6-phosphate. It participates in carbohydrate biosynthesis; gluconeogenesis. It functions in the pathway carbohydrate degradation; glycolysis; D-glyceraldehyde 3-phosphate and glycerone phosphate from D-glucose: step 2/4. Its function is as follows. Catalyzes the reversible isomerization of glucose-6-phosphate to fructose-6-phosphate. The protein is Glucose-6-phosphate isomerase of Methylocella silvestris (strain DSM 15510 / CIP 108128 / LMG 27833 / NCIMB 13906 / BL2).